Consider the following 274-residue polypeptide: Large ribosomal subunit protein uL2 (274 aa).

The interval 221 to 254 (RGTAMNPADHPHGGGEGRTFGKHPVSPWGLPTKG) is disordered.

It belongs to the universal ribosomal protein uL2 family. In terms of assembly, part of the 50S ribosomal subunit. Forms a bridge to the 30S subunit in the 70S ribosome.

In terms of biological role, one of the primary rRNA binding proteins. Required for association of the 30S and 50S subunits to form the 70S ribosome, for tRNA binding and peptide bond formation. It has been suggested to have peptidyltransferase activity; this is somewhat controversial. Makes several contacts with the 16S rRNA in the 70S ribosome. The protein is Large ribosomal subunit protein uL2 of Sulfurihydrogenibium sp. (strain YO3AOP1).